The following is a 191-amino-acid chain: Lipid A acyltransferase PagP (191 aa).

A signal peptide spans 1–26; sequence MLKVNKYVILIIAFVSQMMFSTTAQA. Active-site residues include His-63, Asp-106, and Ser-107.

Belongs to the lipid A palmitoyltransferase family. In terms of assembly, homodimer.

The protein localises to the cell outer membrane. The enzyme catalyses a lipid A + a 1,2-diacyl-sn-glycero-3-phosphocholine = a hepta-acyl lipid A + a 2-acyl-sn-glycero-3-phosphocholine. It catalyses the reaction a lipid IVA + a 1,2-diacyl-sn-glycero-3-phosphocholine = a lipid IVB + a 2-acyl-sn-glycero-3-phosphocholine. The catalysed reaction is a lipid IIA + a 1,2-diacyl-sn-glycero-3-phosphocholine = a lipid IIB + a 2-acyl-sn-glycero-3-phosphocholine. Its function is as follows. Transfers a fatty acid residue from the sn-1 position of a phospholipid to the N-linked hydroxyfatty acid chain on the proximal unit of lipid A or its precursors. The protein is Lipid A acyltransferase PagP of Enterobacter lignolyticus (strain SCF1).